We begin with the raw amino-acid sequence, 61 residues long: Putative antitoxin APE_0472b.1 (61 aa).

This sequence belongs to the UPF0165 family.

Possibly the antitoxin component of a type II toxin-antitoxin (TA) system. This chain is Putative antitoxin APE_0472b.1, found in Aeropyrum pernix (strain ATCC 700893 / DSM 11879 / JCM 9820 / NBRC 100138 / K1).